The following is a 309-amino-acid chain: uncharacterized protein (309 aa).

The HTH lysR-type domain maps to 1 to 60 (MKPLLDVLMILDALEKEGSFAAASAKLYKTPSALSYTVHKLESDLNIQLLDRSGHRAKFT). The H-T-H motif DNA-binding region spans 20–39 (FAAASAKLYKTPSALSYTVH).

Belongs to the LysR transcriptional regulatory family.

This is an uncharacterized protein from Escherichia coli (strain K12).